The following is a 133-amino-acid chain: MTYNEKIISMNNDLLDHQHKELFEISKKLSLMNQRHVGTKELKIVLRELLIMINRHFSDEEAFMREIGYPYINHHTRIHRKIILEIEEIIISEAKFVNIMTEKLNLVVQDFIFKHTAKEDSKIVKYYEEKFKK.

Residues H19, H56, E60, H75, H79, H115, and D120 each coordinate Fe cation.

It belongs to the hemerythrin family. In terms of assembly, monomer.

Functionally, oxygen-binding protein. May be involved in a storage mechanism or for delivery to oxygen-requiring enzymes. The oxygen-binding site contains two iron atoms. The chain is Bacteriohemerythrin from Campylobacter jejuni subsp. jejuni serotype O:23/36 (strain 81-176).